A 274-amino-acid chain; its full sequence is Bis(5'-nucleosyl)-tetraphosphatase, symmetrical (274 aa).

The protein belongs to the Ap4A hydrolase family.

It carries out the reaction P(1),P(4)-bis(5'-adenosyl) tetraphosphate + H2O = 2 ADP + 2 H(+). Its function is as follows. Hydrolyzes diadenosine 5',5'''-P1,P4-tetraphosphate to yield ADP. In Janthinobacterium sp. (strain Marseille) (Minibacterium massiliensis), this protein is Bis(5'-nucleosyl)-tetraphosphatase, symmetrical.